The chain runs to 224 residues: Deoxyribose-phosphate aldolase (224 aa).

Asp-92 acts as the Proton donor/acceptor in catalysis. Lys-155 serves as the catalytic Schiff-base intermediate with acetaldehyde. Lys-184 (proton donor/acceptor) is an active-site residue.

Belongs to the DeoC/FbaB aldolase family. DeoC type 1 subfamily.

It localises to the cytoplasm. It catalyses the reaction 2-deoxy-D-ribose 5-phosphate = D-glyceraldehyde 3-phosphate + acetaldehyde. It participates in carbohydrate degradation; 2-deoxy-D-ribose 1-phosphate degradation; D-glyceraldehyde 3-phosphate and acetaldehyde from 2-deoxy-alpha-D-ribose 1-phosphate: step 2/2. Functionally, catalyzes a reversible aldol reaction between acetaldehyde and D-glyceraldehyde 3-phosphate to generate 2-deoxy-D-ribose 5-phosphate. The protein is Deoxyribose-phosphate aldolase of Clostridium perfringens (strain 13 / Type A).